A 366-amino-acid chain; its full sequence is Histidinol-phosphate aminotransferase 2 (366 aa).

The segment covering 1–11 (MQVKDQLSSLQ) has biased composition (polar residues). The disordered stretch occupies residues 1 to 21 (MQVKDQLSSLQPYKPGKSPEQ). Lysine 222 is modified (N6-(pyridoxal phosphate)lysine).

Belongs to the class-II pyridoxal-phosphate-dependent aminotransferase family. Histidinol-phosphate aminotransferase subfamily. In terms of assembly, homodimer. The cofactor is pyridoxal 5'-phosphate.

The catalysed reaction is L-histidinol phosphate + 2-oxoglutarate = 3-(imidazol-4-yl)-2-oxopropyl phosphate + L-glutamate. Its pathway is amino-acid biosynthesis; L-histidine biosynthesis; L-histidine from 5-phospho-alpha-D-ribose 1-diphosphate: step 7/9. This chain is Histidinol-phosphate aminotransferase 2, found in Bacillus thuringiensis subsp. konkukian (strain 97-27).